A 390-amino-acid chain; its full sequence is Putative nickel insertion protein (390 aa).

Belongs to the LarC family.

The chain is Putative nickel insertion protein from Geotalea uraniireducens (strain Rf4) (Geobacter uraniireducens).